The following is a 285-amino-acid chain: tRNA (adenine(58)-N(1))-methyltransferase catalytic subunit TRMT61A (285 aa).

At Ser2 the chain carries N-acetylserine. Substrate regions lie at residues 20-22, 35-42, 64-65, 85-89, and 110-117; these read LGH, QTQTRHGV, GW, QILYS, and SGTGSGSV. Residues Leu87, 114-116, Glu135, Arg140, 163-164, and Asp181 each bind S-adenosyl-L-methionine; these read SGS and DV. Substrate stretches follow at residues 180-183 and 205-212; these read LDIP and SFSPCIEQ. Thr274 contacts substrate.

The protein belongs to the class I-like SAM-binding methyltransferase superfamily. TRM61 family. In terms of assembly, heterotetramer; composed of two copies of TRMT6 and two copies of TRMT61A.

The protein resides in the nucleus. The enzyme catalyses adenosine(58) in tRNA + S-adenosyl-L-methionine = N(1)-methyladenosine(58) in tRNA + S-adenosyl-L-homocysteine + H(+). It catalyses the reaction an adenosine in mRNA + S-adenosyl-L-methionine = an N(1)-methyladenosine in mRNA + S-adenosyl-L-homocysteine + H(+). Catalytic subunit of tRNA (adenine-N(1)-)-methyltransferase, which catalyzes the formation of N(1)-methyladenine at position 58 (m1A58) in initiator methionyl-tRNA. Catalytic subunit of mRNA N(1)-methyltransferase complex, which mediates methylation of adenosine residues at the N(1) position of a small subset of mRNAs: N(1) methylation takes place in tRNA T-loop-like structures of mRNAs and is only present at low stoichiometries. In Bos taurus (Bovine), this protein is tRNA (adenine(58)-N(1))-methyltransferase catalytic subunit TRMT61A (TRMT61A).